A 165-amino-acid polypeptide reads, in one-letter code: MLVGNSWTRSLEPVSGHEHTEVDVPALPHRKTEVDVDVSLRLRTTSGPGLPVPASLHYGADDPYAIHAVFRGGDTDVEWVFARDLLREGLSAPAGAGDVQVQPCSDSPDGRPRVLLRLSSPDGNAELEADESDVRRFLRRADALVPPGRETRHLDLDELIARLVS.

Residues 1 to 21 (MLVGNSWTRSLEPVSGHEHTE) are disordered.

It belongs to the SsgA family. As to quaternary structure, interacts with SsgA. Interacts with FtsZ (via N-terminus).

Its subcellular location is the cell septum. In terms of biological role, involved in sporulation-specific cell division. Required for early stages of sporulation. Important in the process of growth cessation prior to sporulation-specific cell division. Recruits cell division protein FtsZ to the future septum sites and tethers the contractile ring structure (Z ring) to the cytoplasmic membrane during sporulation. Stimulates polymerization and filament length of FtsZ in vitro. The protein is Sporulation-specific cell division protein SsgB of Kineococcus radiotolerans (strain ATCC BAA-149 / DSM 14245 / SRS30216).